The sequence spans 165 residues: Lymphocyte antigen 6K (165 aa).

The first 17 residues, 1–17 (MALLALLLVVALPRVWT), serve as a signal peptide directing secretion. Asn-20 carries N-linked (GlcNAc...) asparagine glycosylation. The 95-residue stretch at 47-141 (ERENTFECQN…VFKEYAGSMG (95 aa)) folds into the UPAR/Ly6 domain. Residue Gly-138 is the site of GPI-anchor amidated glycine attachment. Positions 139 to 165 (SMGESCGGLWLAILLLLASIAAGLSLS) are cleaved as a propeptide — removed in mature form.

As to quaternary structure, interacts with TEX101. In terms of tissue distribution, specifically expressed in testis (at protein level).

It localises to the secreted. The protein resides in the cytoplasm. Its subcellular location is the cell membrane. It is found in the cytoplasmic vesicle. The protein localises to the secretory vesicle. It localises to the acrosome. The protein resides in the membrane raft. Its function is as follows. Required for sperm migration into the oviduct and male fertility by controlling binding of sperm to zona pellucida. May play a role in cell growth. The sequence is that of Lymphocyte antigen 6K from Homo sapiens (Human).